The primary structure comprises 193 residues: MAAVLNLQLKVDADLKAFLAAEGRPLHGKTGAILEQTLEAIFANIAIQGTSEQTEFLDVLVEVKSMEDQKVVGSFNLKEVVGLIKIFRTTSSDPNISSMTFRQVCEAFAPEARNGLVKLKYKGVFTNLFSTTPEVGGKYPELMFDFNKGLNMFIMNKAQQKVITNMNRRLLQTEFAKSENEAKMSSVTTDLCV.

It is found in the virion. The chain is Capsid protein from Apple chlorotic leaf spot virus (isolate apple) (ACLSV).